The primary structure comprises 250 residues: Zinc finger protein lsy-27 (250 aa).

2 consecutive C2H2-type zinc fingers follow at residues F25–H48 and H52–H75. The C2H2-type 3; degenerate zinc finger occupies F81–Q104. Disordered stretches follow at residues I126–R177 and Q226–E250. The span at S148–S165 shows a compositional bias: low complexity. A compositionally biased stretch (basic and acidic residues) spans M239–E250.

Its function is as follows. Involved in regulating left/right asymmetric differentiation of the gustatory ASE neurons. Plays a role in modulating expression of LIM/homeobox protein lim-6. The polypeptide is Zinc finger protein lsy-27 (Caenorhabditis elegans).